The sequence spans 194 residues: ATP-dependent Clp protease proteolytic subunit 1 (194 aa).

Catalysis depends on S98, which acts as the Nucleophile. H123 is an active-site residue.

This sequence belongs to the peptidase S14 family. As to quaternary structure, fourteen ClpP subunits assemble into 2 heptameric rings which stack back to back to give a disk-like structure with a central cavity, resembling the structure of eukaryotic proteasomes.

The protein localises to the cytoplasm. It catalyses the reaction Hydrolysis of proteins to small peptides in the presence of ATP and magnesium. alpha-casein is the usual test substrate. In the absence of ATP, only oligopeptides shorter than five residues are hydrolyzed (such as succinyl-Leu-Tyr-|-NHMec, and Leu-Tyr-Leu-|-Tyr-Trp, in which cleavage of the -Tyr-|-Leu- and -Tyr-|-Trp bonds also occurs).. Cleaves peptides in various proteins in a process that requires ATP hydrolysis. Has a chymotrypsin-like activity. Plays a major role in the degradation of misfolded proteins. ClpXP1 is involved in the complete degradation of the Site-2 clipped anti-sigma-W factor RsiW. This results in the release of SigW and the transcription activation of the genes under the control of the sigma-W factor. This chain is ATP-dependent Clp protease proteolytic subunit 1, found in Halalkalibacterium halodurans (strain ATCC BAA-125 / DSM 18197 / FERM 7344 / JCM 9153 / C-125) (Bacillus halodurans).